A 366-amino-acid polypeptide reads, in one-letter code: UDP-N-acetylglucosamine--N-acetylmuramyl-(pentapeptide) pyrophosphoryl-undecaprenol N-acetylglucosamine transferase (366 aa).

Residues 10 to 12 (TGG), asparagine 124, arginine 166, serine 196, and glutamine 297 each bind UDP-N-acetyl-alpha-D-glucosamine.

It belongs to the glycosyltransferase 28 family. MurG subfamily.

It is found in the cell membrane. The catalysed reaction is di-trans,octa-cis-undecaprenyl diphospho-N-acetyl-alpha-D-muramoyl-L-alanyl-D-glutamyl-meso-2,6-diaminopimeloyl-D-alanyl-D-alanine + UDP-N-acetyl-alpha-D-glucosamine = di-trans,octa-cis-undecaprenyl diphospho-[N-acetyl-alpha-D-glucosaminyl-(1-&gt;4)]-N-acetyl-alpha-D-muramoyl-L-alanyl-D-glutamyl-meso-2,6-diaminopimeloyl-D-alanyl-D-alanine + UDP + H(+). Its pathway is cell wall biogenesis; peptidoglycan biosynthesis. Functionally, cell wall formation. Catalyzes the transfer of a GlcNAc subunit on undecaprenyl-pyrophosphoryl-MurNAc-pentapeptide (lipid intermediate I) to form undecaprenyl-pyrophosphoryl-MurNAc-(pentapeptide)GlcNAc (lipid intermediate II). In Alkaliphilus metalliredigens (strain QYMF), this protein is UDP-N-acetylglucosamine--N-acetylmuramyl-(pentapeptide) pyrophosphoryl-undecaprenol N-acetylglucosamine transferase.